Consider the following 453-residue polypeptide: Aldehyde dehydrogenase, dimeric NADP-preferring (453 aa).

S2 bears the N-acetylserine mark. The residue at position 178 (K178) is an N6-acetyllysine. 188–193 (GSTAVG) is an NAD(+) binding site. K194 carries the N6-acetyllysine modification. Catalysis depends on residues E210 and C244.

This sequence belongs to the aldehyde dehydrogenase family. As to quaternary structure, homodimer. Constitutively expressed in cornea, stomach, skin, bladder and lungs. Lowest expression levels in lungs and bladder.

The protein resides in the cytoplasm. The enzyme catalyses an aldehyde + NAD(+) + H2O = a carboxylate + NADH + 2 H(+). The catalysed reaction is octanal + NAD(+) + H2O = octanoate + NADH + 2 H(+). Functionally, ALDHs play a major role in the detoxification of alcohol-derived acetaldehyde. They are involved in the metabolism of corticosteroids, biogenic amines, neurotransmitters, and lipid peroxidation. Oxidizes medium and long chain aldehydes into non-toxic fatty acids. Preferentially oxidizes aromatic aldehyde substrates. Comprises about 50 percent of corneal epithelial soluble proteins. May play a role in preventing corneal damage caused by ultraviolet light. This chain is Aldehyde dehydrogenase, dimeric NADP-preferring (Aldh3a1), found in Mus musculus (Mouse).